Consider the following 280-residue polypeptide: SERGCAYCGAKHVIGTPMKDVIHISHGPVGCTYDTWQTKRYISDNDNFQLKYTYATDMKEKHIVFGAEKLLKKNIIEAFQAFPDIKRMTIYQTCASALIGDDINAIAQEVMDELPDVDIFVCNSPGFAGPSQSGGHHKINIAWIDQKVGTVEPKITSDYVINYVGEYNIQGDQEVMLDYFKRMGIQVLSTFTGNGSYDDLRAMHRAHLNVLECARSAEYICNELRVRYGIPRLDIDGFGFEPLSTSLRKIGLFFGIEDRAQAIIEEETARWKPELDWYKE.

The [8Fe-7S] cluster site is built by C5, C31, and C94. C213 is a binding site for [8Fe-9S-C-homocitryl] cluster.

It belongs to the NifD/NifK/NifE/NifN family. In terms of assembly, hexamer of two alpha, two beta, and two delta chains. It depends on [8Fe-7S] cluster as a cofactor. The cofactor is [8Fe-9S-C-homocitryl] cluster.

The enzyme catalyses N2 + 8 reduced [2Fe-2S]-[ferredoxin] + 16 ATP + 16 H2O = H2 + 8 oxidized [2Fe-2S]-[ferredoxin] + 2 NH4(+) + 16 ADP + 16 phosphate + 6 H(+). Functionally, this iron-iron protein is part of the nitrogenase complex that catalyzes the key enzymatic reactions in nitrogen fixation. Other nitrogenase complexes utilize a molybdenum-iron protein or a vanadium-iron protein. The chain is Nitrogenase iron-iron protein alpha chain (anfD) from Heliomicrobium gestii (Heliobacterium gestii).